The following is a 337-amino-acid chain: Tetraacyldisaccharide 4'-kinase (337 aa).

55 to 62 lines the ATP pocket; the sequence is TAGGNGKT.

The protein belongs to the LpxK family.

It catalyses the reaction a lipid A disaccharide + ATP = a lipid IVA + ADP + H(+). It participates in glycolipid biosynthesis; lipid IV(A) biosynthesis; lipid IV(A) from (3R)-3-hydroxytetradecanoyl-[acyl-carrier-protein] and UDP-N-acetyl-alpha-D-glucosamine: step 6/6. In terms of biological role, transfers the gamma-phosphate of ATP to the 4'-position of a tetraacyldisaccharide 1-phosphate intermediate (termed DS-1-P) to form tetraacyldisaccharide 1,4'-bis-phosphate (lipid IVA). This is Tetraacyldisaccharide 4'-kinase from Sodalis glossinidius (strain morsitans).